A 351-amino-acid chain; its full sequence is D-alanine--D-alanine ligase (351 aa).

The ATP-grasp domain maps to 135–344; that stretch reads KMAFAQAGLP…FAELVDQLIQ (210 aa). 171 to 226 serves as a coordination point for ATP; it reads EQRLGYPCFVKPANLGSSVGIAKVRSRSELEKALDSAASYDRRIVIETGVKAREVE. The Mg(2+) site is built by Asp297, Glu311, and Asn313.

The protein belongs to the D-alanine--D-alanine ligase family. It depends on Mg(2+) as a cofactor. The cofactor is Mn(2+).

It localises to the cytoplasm. The catalysed reaction is 2 D-alanine + ATP = D-alanyl-D-alanine + ADP + phosphate + H(+). It functions in the pathway cell wall biogenesis; peptidoglycan biosynthesis. Its function is as follows. Cell wall formation. The sequence is that of D-alanine--D-alanine ligase from Rippkaea orientalis (strain PCC 8801 / RF-1) (Cyanothece sp. (strain PCC 8801)).